A 297-amino-acid chain; its full sequence is Putative movement protein (297 aa).

The disordered stretch occupies residues 249–297 (STGLKIRDKSEDDNQRKHPVPLTSSNNKLKTLRVSTTPIVNGRSTSTSE). Positions 253–264 (KIRDKSEDDNQR) are enriched in basic and acidic residues. Over residues 270–297 (LTSSNNKLKTLRVSTTPIVNGRSTSTSE) the composition is skewed to polar residues.

The protein resides in the host cell junction. Its subcellular location is the host plasmodesma. Its function is as follows. Transports viral genome to neighboring plant cells directly through plasmosdesmata, without any budding. The movement protein allows efficient cell to cell propagation, by bypassing the host cell wall barrier. The protein is Putative movement protein (MP) of Citrus sinensis (Sweet orange).